The sequence spans 61 residues: Small ribosomal subunit protein uS14 (61 aa).

Positions 24, 27, 40, and 43 each coordinate Zn(2+).

It belongs to the universal ribosomal protein uS14 family. Zinc-binding uS14 subfamily. In terms of assembly, part of the 30S ribosomal subunit. Contacts proteins S3 and S10. Zn(2+) serves as cofactor.

Functionally, binds 16S rRNA, required for the assembly of 30S particles and may also be responsible for determining the conformation of the 16S rRNA at the A site. The polypeptide is Small ribosomal subunit protein uS14 (Staphylococcus aureus (strain USA300 / TCH1516)).